The chain runs to 406 residues: Putative Bro-N domain-containing protein 019R (406 aa).

The Bro-N domain occupies 4 to 138 (LINLKQSREY…QILPSIRKYG (135 aa)). Coiled coils occupy residues 141-177 (QLEMQLTQAMEQLSIKERDVQEAHEARIKAERKAVRV) and 343-372 (DSINEKVKQNLEEIVIERKELISKLADKTN).

It belongs to the IIV-6 201R/289L family.

The chain is Putative Bro-N domain-containing protein 019R from Invertebrate iridescent virus 3 (IIV-3).